The chain runs to 68 residues: Serine rich endogenous peptide 22 (68 aa).

The signal sequence occupies residues 1–25 (MNKALVWLITLLFLIFSATPNRVLA). Positions 50–64 (KIGVGASNSGHSPGA) match the SCOOP motif motif. The short motif at 56 to 58 (SNS) is the SxS motif essential for MIK2 binding element.

This sequence belongs to the serine rich endogenous peptide (SCOOP) phytocytokine family. As to quaternary structure, interacts with MIK2 (via extracellular leucine-rich repeat domain); this interaction triggers the formation of complex between MIK2 and the BAK1/SERK3 and SERK4 coreceptors, and subsequent BAK1 activation by phosphorylation.

It is found in the cell membrane. The protein localises to the secreted. Its subcellular location is the extracellular space. It localises to the apoplast. In terms of biological role, brassicaceae-specific phytocytokine (plant endogenous peptide released into the apoplast) perceived by MIK2 in a BAK1/SERK3 and SERK4 coreceptors-dependent manner, that modulates various physiological and antimicrobial processes including growth prevention and reactive oxygen species (ROS) response regulation. In Arabidopsis thaliana (Mouse-ear cress), this protein is Serine rich endogenous peptide 22.